Here is a 331-residue protein sequence, read N- to C-terminus: Centriolar satellite-associated tubulin polyglutamylase complex regulator 1 (331 aa).

The segment at 1-111 is required for interaction with PCM1; that stretch reads MLSPERLALP…HCLLQLLCPD (111 aa). A required for interaction with TPGS1, LRRC49, and TTLL1 region spans residues 1–225; it reads MLSPERLALP…SCPPPALVKE (225 aa). The tract at residues 112–331 is required for interaction with TPGS2; that stretch reads FPLELTQKAA…STEETDESET (220 aa). The tract at residues 292-331 is disordered; the sequence is SCLPSRTPPRVGSPWKPLHRSRKLDAESDGSTEETDESET. Positions 318-331 are enriched in acidic residues; it reads ESDGSTEETDESET. A Phosphoserine modification is found at Ser-319.

This sequence belongs to the CSTPP1 family. In terms of assembly, interacts with PCM1. Interacts with TTLL1, TPGS1, TPGS2 and LRRC49; the interactions link CSTPP1 to the complex TPGC. Binds to alpha-tubulin.

The protein resides in the cytoplasm. It localises to the cytoskeleton. Its subcellular location is the microtubule organizing center. It is found in the centrosome. The protein localises to the centriolar satellite. Functionally, regulator of the tubulin polyglutamylase complex (TPGC) that controls cytoskeletal organization, nuclear shape, and cilium disassembly by balancing microtubule and actin assembly. Regulates the assembly and stability of the TPGC and thereby modulates polyglutamylation of the microtubule, which antagonizes MAP4 binding. This is Centriolar satellite-associated tubulin polyglutamylase complex regulator 1 (Cstpp1) from Rattus norvegicus (Rat).